Consider the following 595-residue polypeptide: Tripeptidyl-peptidase SED3 (595 aa).

Positions 1–22 are cleaved as a signal peptide; it reads MLLPWQQTIIILFLGVNSLVAA. Residues 23–201 constitute a propeptide, removed in mature form; that stretch reads LRNTYRTVEE…KLETIQLSSN (179 aa). Residues Asn207, Asn264, and Asn278 are each glycosylated (N-linked (GlcNAc...) asparagine). The Peptidase S53 domain occupies 209–595; that stretch reads TITPQCLRDI…EILAKIVRDL (387 aa). Active-site charge relay system residues include Glu285 and Asp289. Residues Asn298 and Asn365 are each glycosylated (N-linked (GlcNAc...) asparagine). Ser499 serves as the catalytic Charge relay system. Asp541 and Ile542 together coordinate Ca(2+). N-linked (GlcNAc...) asparagine glycosylation is found at Asn554, Asn557, and Asn569. Positions 573 and 575 each coordinate Ca(2+).

Requires Ca(2+) as cofactor.

It is found in the secreted. Its subcellular location is the extracellular space. It carries out the reaction Release of an N-terminal tripeptide from a polypeptide.. In terms of biological role, secreted tripeptidyl-peptidase which degrades proteins at acidic pHs and is involved in virulence. This is Tripeptidyl-peptidase SED3 (SED3) from Arthroderma otae (strain ATCC MYA-4605 / CBS 113480) (Microsporum canis).